Reading from the N-terminus, the 193-residue chain is Inner membrane-spanning protein YciB (193 aa).

Transmembrane regions (helical) follow at residues 5–25 (TLDA…FYIY), 36–56 (IIAA…LMFV), 67–87 (WLVV…QDDF), 93–113 (APII…FLGG), 138–158 (VWVG…FVWV), and 164–184 (FTAF…FWFL).

Belongs to the YciB family.

Its subcellular location is the cell inner membrane. Functionally, plays a role in cell envelope biogenesis, maintenance of cell envelope integrity and membrane homeostasis. In Vitreoscilla sp. (strain C1), this protein is Inner membrane-spanning protein YciB.